Here is an 843-residue protein sequence, read N- to C-terminus: OTU domain-containing protein 7B (843 aa).

Residues 50 to 88 form a disordered region; the sequence is GNLPPSFSEGSGGSRTPEKGFSDREPTRPPRPILQRQDD. The segment covering 65-77 has biased composition (basic and acidic residues); it reads TPEKGFSDREPTR. Ser-100 carries the phosphoserine modification. The TRAF-binding stretch occupies residues 152–401; sequence ERDLIEQSML…AVDPGKGWEW (250 aa). The tract at residues 167-440 is catalytic; it reads AGRLNWWVSV…VKWIPLSSDA (274 aa). The region spanning 183–365 is the OTU domain; that stretch reads LLPLATTGDG…QAHFSALVSM (183 aa). The tract at residues 187–193 is regulatory loop; that stretch reads ATTGDGN. Residue Asp-191 is part of the active site. Cys-194 serves as the catalytic Nucleophile. The active-site Proton acceptor is His-358. 2 disordered regions span residues 442-587 and 652-711; these read APLA…GGSK and IMNG…CQEP. Composition is skewed to basic and acidic residues over residues 456 to 471 and 488 to 500; these read DEPR…DKES and SKRD…KRAD. A phosphoserine mark is found at Ser-464, Ser-467, and Ser-471. The Nuclear localization signal motif lies at 483–498; that stretch reads RRKEKSKRDREKDKKR. Residues 531–543 show a composition bias toward gly residues; it reads KPGGVGTGLGGSS. Over residues 665-675 the composition is skewed to basic and acidic residues; it reads KKPEPDAREEQ. Thr-729 bears the Phosphothreonine mark. Residues 732–792 form a disordered region; sequence RQCPPGRPYP…PEPDGWAGGL (61 aa). The A20-type zinc-finger motif lies at 796–831; it reads PPTQTKCKQPNCSFYGHPETNNFCSCCYREELRRRE. Cys-802, Cys-807, Cys-819, and Cys-822 together coordinate Zn(2+).

Belongs to the peptidase C64 family. Interacts with ZAP70 in activated T cells, but not in resting T cells. Interacts with TRAF3. Interacts with TRAF6. Interacts with PARK7, leading to inhibit deubiquitinase activity. Interacts with EGFR, ITCH and NEDD4. In terms of processing, phosphorylated by EGFR. As to expression, widely expressed. Abundant in kidney, heart and fetal liver. Expressed differentially among B-cells at distinct developmental stages. Higher expression seen in primary immature B-cells as compared to the mature cells.

Its subcellular location is the cytoplasm. The protein resides in the nucleus. It carries out the reaction Thiol-dependent hydrolysis of ester, thioester, amide, peptide and isopeptide bonds formed by the C-terminal Gly of ubiquitin (a 76-residue protein attached to proteins as an intracellular targeting signal).. Deubiquitinase activity is inhibited following interaction with PARK7. In terms of biological role, negative regulator of the non-canonical NF-kappa-B pathway that acts by mediating deubiquitination of TRAF3, an inhibitor of the NF-kappa-B pathway, thereby acting as a negative regulator of B-cell responses. In response to non-canonical NF-kappa-B stimuli, deubiquitinates 'Lys-48'-linked polyubiquitin chains of TRAF3, preventing TRAF3 proteolysis and over-activation of non-canonical NF-kappa-B. Negatively regulates mucosal immunity against infections. Deubiquitinates ZAP70, and thereby regulates T cell receptor (TCR) signaling that leads to the activation of NF-kappa-B. Plays a role in T cell homeostasis and is required for normal T cell responses, including production of IFNG and IL2. Mediates deubiquitination of EGFR. Has deubiquitinating activity toward 'Lys-11', 'Lys-48' and 'Lys-63'-linked polyubiquitin chains. Has a much higher catalytic rate with 'Lys-11'-linked polyubiquitin chains (in vitro); however the physiological significance of these data are unsure. Hydrolyzes both linear and branched forms of polyubiquitin. Acts as a regulator of mTORC1 and mTORC2 assembly by mediating 'Lys-63'-linked deubiquitination of MLST8, thereby promoting assembly of the mTORC2 complex, while inibiting formation of the mTORC1 complex. The sequence is that of OTU domain-containing protein 7B (OTUD7B) from Homo sapiens (Human).